A 1407-amino-acid polypeptide reads, in one-letter code: Adenylate cyclase, aggregation specific (1407 aa).

At 1-219 (MASSSPMFND…KGYLHQHYNS (219 aa)) the chain is on the cytoplasmic side. A disordered region spans residues 28–131 (NELHDGNGGG…SNSVANGGHL (104 aa)). Residues 51-63 (LNKSQNQPYTQYN) are compositionally biased toward polar residues. Gly residues predominate over residues 64–75 (NGGGGGGGGGGH). Composition is skewed to low complexity over residues 80-90 (HLNLNSITNNH) and 98-115 (PNTL…NNHS). 6 helical membrane-spanning segments follow: residues 220-240 (QIML…YGFT), 244-264 (IFML…SIFL), 276-296 (LFHP…LLEY), 304-324 (ILFL…LLFI), 325-345 (WMVM…FLES), and 353-373 (ISFV…LYVL). The Cytoplasmic segment spans residues 374–962 (EKFRKESFIA…KYVIINNVVE (589 aa)). The Guanylate cyclase 1 domain occupies 438 to 661 (SILCFDIVQF…DTIARSHTLE (224 aa)). Residues aspartate 443, isoleucine 444, and aspartate 488 each coordinate Mg(2+). Disordered stretches follow at residues 502–590 (AKKQ…EEIE), 751–799 (KSNN…VLGE), and 828–876 (NDIV…EEDF). Composition is skewed to low complexity over residues 505-526 (QMPN…VNNI), 535-581 (NNNN…NNSG), and 752-795 (SNNN…SSSS). Residues 828-846 (NDIVSPSLTSNSPILDTTV) are compositionally biased toward polar residues. Over residues 847-871 (NNNNNNNNTNNNNKNQNNIYGNNNN) the composition is skewed to low complexity. The next 5 membrane-spanning stretches (helical) occupy residues 963-979 (TKFF…MFYL), 992-1012 (SNVI…LSFT), 1018-1038 (PLVY…CTVL), 1071-1091 (LSVL…SILI), and 1105-1125 (IGFV…KLAM). In terms of domain architecture, Guanylate cyclase 2 spans 1189-1311 (SIMFIQIAGF…DTANTASRMQ (123 aa)). Residues 1378–1398 (ATPAGIASPLSGTLLGEIGSF) form a helical membrane-spanning segment. The Cytoplasmic segment spans residues 1399–1407 (TTPRFHLSS).

Belongs to the adenylyl cyclase class-4/guanylyl cyclase family. Mg(2+) is required as a cofactor. As to expression, expressed throughout the structure in the tipped mound and finger. Expressed primarily in the prestalk region of the slug. In the early culminant expression is increased in the posterior prespore and anterior-most regions and expands into the developing stalk. In the mid and late culminant it is expressed throughout the stalk.

The protein localises to the membrane. It localises to the cell projection. It is found in the uropodium. It carries out the reaction ATP = 3',5'-cyclic AMP + diphosphate. Its activity is regulated as follows. Regulated by cyclic AMP receptor 1 through a guanine nucleotide binding protein and protein CRAC. Both positively and negatively regulated by extracellular cAMP; this regulation is part of the mechanism that establishes the oscillatory cAMP waves during aggregation. In terms of biological role, coordinates cell aggregation by synthesizing the cAMP that influences differentiation and morphogenesis of cells within a developing multicellular structure. The polypeptide is Adenylate cyclase, aggregation specific (acaA) (Dictyostelium discoideum (Social amoeba)).